Consider the following 214-residue polypeptide: Large ribosomal subunit protein uL16-like (214 aa).

This sequence belongs to the universal ribosomal protein uL16 family. In terms of assembly, component of a male germ cell-specific 60S large ribosomal subunit (LSU), which contains RPL10L and RPL39L, instead of RPL10 and RPL39 paralogs. The composition of the rest of the complex is similar to classical ribosomes. In terms of tissue distribution, testis-specific.

The protein resides in the cytoplasm. Testis-specific component of the ribosome, which is required for the transition from prophase to metaphase in male meiosis I. Compensates for the inactivated X-linked RPL10 paralog during spermatogenesis. The ribosome is a large ribonucleoprotein complex responsible for the synthesis of proteins in the cell. The male germ cell-specific ribosome displays a ribosomal polypeptide exit tunnel of distinct size and charge states compared with the classical ribosome. It is responsible for regulating the biosynthesis and folding of a subset of male germ-cell-specific proteins that are essential for the formation of sperm. This is Large ribosomal subunit protein uL16-like from Mus musculus (Mouse).